An 869-amino-acid chain; its full sequence is Valine--tRNA ligase (869 aa).

The short motif at 51 to 61 is the 'HIGH' region element; it reads PNVTGNLHLGH. A 'KMSKS' region motif is present at residues 523-527; sequence KMSKS. Lys-526 contacts ATP. Residues 797–869 adopt a coiled-coil conformation; that stretch reads EDLLGSNNEA…ELEKLLSSHK (73 aa).

This sequence belongs to the class-I aminoacyl-tRNA synthetase family. ValS type 1 subfamily. Monomer.

The protein resides in the cytoplasm. The enzyme catalyses tRNA(Val) + L-valine + ATP = L-valyl-tRNA(Val) + AMP + diphosphate. Catalyzes the attachment of valine to tRNA(Val). As ValRS can inadvertently accommodate and process structurally similar amino acids such as threonine, to avoid such errors, it has a 'posttransfer' editing activity that hydrolyzes mischarged Thr-tRNA(Val) in a tRNA-dependent manner. In Malacoplasma penetrans (strain HF-2) (Mycoplasma penetrans), this protein is Valine--tRNA ligase.